We begin with the raw amino-acid sequence, 324 residues long: Probable non-intrinsic ABC protein 5 (324 aa).

Residues 2-111 enclose the ABC transporter domain; the sequence is DRERYDKVIE…ADLTLVMKDG (110 aa). Transmembrane regions (helical) follow at residues 212–232 and 259–279; these read YITL…QILF and LSTL…CILV. In terms of domain architecture, ABC transmembrane type-1 spans 222-324; sequence VPFILLGQIL…TCSKTCIYSS (103 aa).

Belongs to the ABC transporter superfamily.

Its subcellular location is the membrane. In Arabidopsis thaliana (Mouse-ear cress), this protein is Probable non-intrinsic ABC protein 5 (NAP5).